A 175-amino-acid chain; its full sequence is MIQALTLARPYARAAFAIACEKGKCMQWSQALTFSAQVANNPIVATLLSHPQLDHEQAAALLSPEGADPAYIRFLEVIAEAHRLDVLLQVAGLYEKLRAEAQHVIKAKITSAIELAPNELNNIVTALKKRFDCEIEVTTGVDHSLIGGAVIDTGNVVIDGSIKSKLTRLQASLTH.

It belongs to the ATPase delta chain family. As to quaternary structure, F-type ATPases have 2 components, F(1) - the catalytic core - and F(0) - the membrane proton channel. F(1) has five subunits: alpha(3), beta(3), gamma(1), delta(1), epsilon(1). F(0) has three main subunits: a(1), b(2) and c(10-14). The alpha and beta chains form an alternating ring which encloses part of the gamma chain. F(1) is attached to F(0) by a central stalk formed by the gamma and epsilon chains, while a peripheral stalk is formed by the delta and b chains.

Its subcellular location is the cell inner membrane. F(1)F(0) ATP synthase produces ATP from ADP in the presence of a proton or sodium gradient. F-type ATPases consist of two structural domains, F(1) containing the extramembraneous catalytic core and F(0) containing the membrane proton channel, linked together by a central stalk and a peripheral stalk. During catalysis, ATP synthesis in the catalytic domain of F(1) is coupled via a rotary mechanism of the central stalk subunits to proton translocation. Its function is as follows. This protein is part of the stalk that links CF(0) to CF(1). It either transmits conformational changes from CF(0) to CF(1) or is implicated in proton conduction. The polypeptide is ATP synthase subunit delta (Xylella fastidiosa (strain M23)).